The sequence spans 667 residues: Interleukin-17 receptor E (667 aa).

Positions Met1 to Ser23 are cleaved as a signal peptide. The Extracellular portion of the chain corresponds to Ala24–His454. Positions Leu126–His174 are disordered. Residues Asn318, Asn347, and Asn364 are each glycosylated (N-linked (GlcNAc...) asparagine). Residues Leu455–Leu475 traverse the membrane as a helical segment. Over Thr476–Gly667 the chain is Cytoplasmic. The SEFIR domain maps to Ala487–Arg624.

As to quaternary structure, forms heterodimers with IL17RA; the heterodimer binds IL17C. As to expression, predominantly expressed in mucosal tissues with high levels in keratinocytes and colon epithelial cells. Very low expression in dermal fibroblasts. Expressed in various tumor cell lines.

The protein localises to the cell membrane. The protein resides in the cytoplasm. Its subcellular location is the secreted. Specific functional receptor for IL17C. May be signaling through the NF-kappa-B and MAPK pathways. May require TRAF3IP2 /ACT1 for signaling. May be a crucial regulator in innate immunity to bacterial pathogens. Isoform 2 and isoform 4 may be either cytoplasmic inactive or dominant active forms. Isoform 3 and isoform 5 may act as soluble decoy receptors. In Homo sapiens (Human), this protein is Interleukin-17 receptor E (IL17RE).